The sequence spans 395 residues: Succinyl-diaminopimelate desuccinylase (395 aa).

His-74 lines the Zn(2+) pocket. Residue Asp-76 is part of the active site. Residue Asp-107 coordinates Zn(2+). The active-site Proton acceptor is Glu-141. The Zn(2+) site is built by Glu-142, Glu-170, and His-368.

Belongs to the peptidase M20A family. DapE subfamily. As to quaternary structure, homodimer. Requires Zn(2+) as cofactor. Co(2+) is required as a cofactor.

It carries out the reaction N-succinyl-(2S,6S)-2,6-diaminopimelate + H2O = (2S,6S)-2,6-diaminopimelate + succinate. It functions in the pathway amino-acid biosynthesis; L-lysine biosynthesis via DAP pathway; LL-2,6-diaminopimelate from (S)-tetrahydrodipicolinate (succinylase route): step 3/3. Catalyzes the hydrolysis of N-succinyl-L,L-diaminopimelic acid (SDAP), forming succinate and LL-2,6-diaminopimelate (DAP), an intermediate involved in the bacterial biosynthesis of lysine and meso-diaminopimelic acid, an essential component of bacterial cell walls. The polypeptide is Succinyl-diaminopimelate desuccinylase (Chelativorans sp. (strain BNC1)).